Consider the following 1063-residue polypeptide: Structural polyprotein (1063 aa).

Residues 1 to 131 are disordered; that stretch reads MASTTPITME…LGPPTNPFQA (131 aa). The human C1QBP/SF2P32-binding stretch occupies residues 30 to 69; the sequence is GASQSRRPRPPRQRDSSTSGDDSGRDSGGPRRRRGNRGRG. A Phosphoserine; by host modification is found at Ser46. Positions 70-87 are enriched in basic and acidic residues; the sequence is QLRDWSRAPPPPEERQES. A compositionally biased stretch (pro residues) spans 93-107; the sequence is APKPSRAPPQQPQPP. Cys153 and Cys197 are disulfide-bonded. The segment at 279-300 is functions as E2 signal peptide; the sequence is GAPQAFLAGLLLAAVAVGTARA. Topologically, residues 301–534 are extracellular; sequence GLQPRADMAA…LWLATANALS (234 aa). Asn353, Asn371, Asn410, and Asn429 each carry an N-linked (GlcNAc...) asparagine; by host glycan. Residues 535-555 traverse the membrane as a helical segment; that stretch reads LDHALAAFVLLVPWVLIFMVC. The Cytoplasmic segment spans residues 556 to 582; the sequence is RRACRRRGAAAALTAVVLQGYNPPAYG. Residues 563–582 form a functions as E1 signal peptide region; the sequence is GAAAALTAVVLQGYNPPAYG. At 583 to 1028 the chain is on the extracellular side; the sequence is EEAFTYLCTA…QTWAEWAAAH (446 aa). 8 disulfide bridges follow: Cys590–Cys595, Cys619–Cys824, Cys641–Cys653, Cys699–Cys712, Cys758–Cys767, Cys807–Cys817, Cys931–Cys934, and Cys950–Cys983. N-linked (GlcNAc...) asparagine; by host glycosylation occurs at Asn658. Residues Asn670 and Ala671 each coordinate Ca(2+). Ca(2+) is bound by residues Asp718 and Thr719. N-linked (GlcNAc...) asparagine; by host glycosylation is found at Asn759 and Asn791. Residues Thr1011 and Thr1012 are each glycosylated (O-linked (GalNAc...) threonine; by host). A helical membrane pass occupies residues 1029–1049; it reads WWQLTLGAICALLLAGLLACC. Residues 1050–1063 lie on the Extracellular side of the membrane; that stretch reads AKCLYYLRGAIAPR.

In terms of assembly, homodimer; further assembles into homooligomer. Interacts with human C1QBP. Interacts (via N-terminus) with protease/methyltransferase p150. Heterodimer with spike glycoprotein E2. As to quaternary structure, heterodimer with spike glycoprotein E1. Post-translationally, structural polyprotein: Specific enzymatic cleavages in vivo yield mature proteins. Two signal peptidase-mediated cleavages within the polyprotein produce the structural proteins capsid, E2, and E1. The E2 signal peptide remains attached to the C-terminus of the capsid protein after cleavage by the signal peptidase. Another signal peptide at E2 C-terminus directs E1 to the ER, with a similar mechanism. Contains three N-linked oligosaccharides. In terms of processing, capsid is phosphorylated on Ser-46 by host. This phosphorylation negatively regulates capsid protein RNA-binding activity. Dephosphorylated by human PP1A.

It is found in the virion. It localises to the host cytoplasm. The protein resides in the host mitochondrion. The protein localises to the virion membrane. Its subcellular location is the host Golgi apparatus membrane. Capsid protein interacts with genomic RNA and assembles into icosahedric core particles 65-70 nm in diameter. The resulting nucleocapsid eventually associates with the cytoplasmic domain of E2 at the cell membrane, leading to budding and formation of mature virions from host Golgi membranes. Phosphorylation negatively regulates RNA-binding activity, possibly delaying virion assembly during the viral replication phase. Capsid protein dimerizes and becomes disulfide-linked in the virion. Modulates genomic RNA replication. Modulates subgenomic RNA synthesis by interacting with human C1QBP/SF2P32. Induces both perinuclear clustering of mitochondria and the formation of electron-dense intermitochondrial plaques, both hallmarks of rubella virus infected cells. Induces apoptosis when expressed in transfected cells. Functionally, responsible for viral attachment to target host cell, by binding to the cell receptor. Its transport to the plasma membrane depends on interaction with E1 protein. The surface glycoproteins display an irregular helical organization and a pseudo-tetrameric inner nucleocapsid arrangement. In terms of biological role, class II viral fusion protein. Fusion activity is inactive as long as E1 is bound to E2 in mature virion. After virus attachment to target cell and clathrin-mediated endocytosis, acidification of the endosome would induce dissociation of E1/E2 heterodimer and concomitant trimerization of the E1 subunits. This E1 homotrimer is fusion active, and promotes release of viral nucleocapsid in cytoplasm after endosome and viral membrane fusion. The cytoplasmic tail of spike glycoprotein E1 modulates virus release. The surface glycoproteins display an irregular helical organization and a pseudo-tetrameric inner nucleocapsid arrangement. This Homo sapiens (Human) protein is Structural polyprotein.